The primary structure comprises 490 residues: C-type lectin domain family 14 member A (490 aa).

A signal peptide spans 1–21; it reads MRPAFALCLLWQALWPGPGGG. The Extracellular portion of the chain corresponds to 22–397; it reads EHPTADRAGC…TPQAFDSSSA (376 aa). The 141-residue stretch at 33-173 folds into the C-type lectin domain; the sequence is ASGACYSLHH…LRANGYLCKY (141 aa). The cysteines at positions 143 and 162 are disulfide-linked. N-linked (GlcNAc...) asparagine glycosylation occurs at Asn-189. Positions 245-287 constitute an EGF-like domain; the sequence is PCPGRYLRAGKCAELPNCLDDLGGFACECATGFELGKDGRSCV. The disordered stretch occupies residues 286-349; sequence CVTSGEGQPT…VTSIPEIPRW (64 aa). Over residues 301-315 the composition is skewed to low complexity; the sequence is VPTRRPPATATSPVP. N-linked (GlcNAc...) asparagine glycosylation occurs at Asn-381. Residues 398–418 form a helical membrane-spanning segment; that stretch reads VVFIFVSTAVVVLVILTMTVL. The Cytoplasmic portion of the chain corresponds to 419–490; it reads GLVKLCFHES…AESPLGSSDA (72 aa). The interval 428 to 461 is disordered; sequence SPSSQPRKESMGPPGLESDPEPAALGSSSAHCTN.

The protein resides in the membrane. The chain is C-type lectin domain family 14 member A (CLEC14A) from Homo sapiens (Human).